The following is an 82-amino-acid chain: UPF0437 protein in nifX-nifW intergenic region (82 aa).

Belongs to the UPF0437 family.

This chain is UPF0437 protein in nifX-nifW intergenic region, found in Frankia alni.